The primary structure comprises 213 residues: Pyridoxine/pyridoxamine 5'-phosphate oxidase (213 aa).

FMN-binding positions include 60-65 (RMVLMK), 75-76 (YS), lysine 82, and glutamine 104. A substrate-binding site is contributed by lysine 65. Substrate-binding residues include tyrosine 122 and arginine 126. Residues 139–140 (QS) and tryptophan 184 contribute to the FMN site. 190–192 (RLH) serves as a coordination point for substrate. Arginine 194 is an FMN binding site.

It belongs to the pyridoxamine 5'-phosphate oxidase family. Homodimer. FMN is required as a cofactor.

The enzyme catalyses pyridoxamine 5'-phosphate + O2 + H2O = pyridoxal 5'-phosphate + H2O2 + NH4(+). It carries out the reaction pyridoxine 5'-phosphate + O2 = pyridoxal 5'-phosphate + H2O2. It participates in cofactor metabolism; pyridoxal 5'-phosphate salvage; pyridoxal 5'-phosphate from pyridoxamine 5'-phosphate: step 1/1. Its pathway is cofactor metabolism; pyridoxal 5'-phosphate salvage; pyridoxal 5'-phosphate from pyridoxine 5'-phosphate: step 1/1. In terms of biological role, catalyzes the oxidation of either pyridoxine 5'-phosphate (PNP) or pyridoxamine 5'-phosphate (PMP) into pyridoxal 5'-phosphate (PLP). In Nitrobacter winogradskyi (strain ATCC 25391 / DSM 10237 / CIP 104748 / NCIMB 11846 / Nb-255), this protein is Pyridoxine/pyridoxamine 5'-phosphate oxidase.